The primary structure comprises 60 residues: UPF0434 protein YcaR (60 aa).

Belongs to the UPF0434 family.

The polypeptide is UPF0434 protein YcaR (Salmonella agona (strain SL483)).